The following is a 283-amino-acid chain: uncharacterized protein (283 aa).

The next 3 helical transmembrane spans lie at 18-38, 61-81, and 94-114; these read VYDIIVVIVVMALATIIAKLI, VIYFGIIIVAFIAVLPALGLD, and IVLGFASQSVVANLVSGIFLI.

This sequence belongs to the MscS (TC 1.A.23) family.

The protein localises to the cell membrane. This is an uncharacterized protein from Archaeoglobus fulgidus (strain ATCC 49558 / DSM 4304 / JCM 9628 / NBRC 100126 / VC-16).